Reading from the N-terminus, the 241-residue chain is Ubiquinone biosynthesis O-methyltransferase (241 aa).

S-adenosyl-L-methionine is bound by residues Arg46, Gly66, Asp87, and Met131.

This sequence belongs to the methyltransferase superfamily. UbiG/COQ3 family.

The catalysed reaction is a 3-demethylubiquinol + S-adenosyl-L-methionine = a ubiquinol + S-adenosyl-L-homocysteine + H(+). It catalyses the reaction a 3-(all-trans-polyprenyl)benzene-1,2-diol + S-adenosyl-L-methionine = a 2-methoxy-6-(all-trans-polyprenyl)phenol + S-adenosyl-L-homocysteine + H(+). It participates in cofactor biosynthesis; ubiquinone biosynthesis. Its function is as follows. O-methyltransferase that catalyzes the 2 O-methylation steps in the ubiquinone biosynthetic pathway. The sequence is that of Ubiquinone biosynthesis O-methyltransferase from Bordetella avium (strain 197N).